A 221-amino-acid chain; its full sequence is uncharacterized protein (221 aa).

An MOSC domain is found at 33-167 (RPAKSAVMLY…VSPGANLELL (135 aa)).

This is an uncharacterized protein from Bacillus subtilis (strain 168).